The following is a 20-amino-acid chain: Equinatoxin-1'' (20 aa).

The plays an important role in the hemolytic activity stretch occupies residues 3 to 12; it reads AVAGAVIEGA. The segment at 11–20 is N-terminal region; the sequence is GATLTFNVLQ.

The protein belongs to the actinoporin family. Sea anemone subfamily. In terms of assembly, octamer or nonamer in membranes. Monomer in the soluble state.

It is found in the secreted. It localises to the nematocyst. The protein resides in the target cell membrane. In terms of biological role, pore-forming protein that forms cations-selective hydrophilic pores of around 1 nm and causes cardiac stimulation and cytolysis. Pore formation is a multi-step process that involves specific recognition of membrane sphingomyelin (but neither cholesterol nor phosphatidylcholine) using aromatic rich region and adjacent phosphocholine (POC) binding site, firm binding to the membrane (mainly driven by hydrophobic interactions) accompanied by the transfer of the N-terminal region to the lipid-water interface and finally pore formation after oligomerization of monomers. Cytolytic effects include red blood cells hemolysis, platelet aggregation and lysis, cytotoxic and cytostatic effects on fibroblasts. Lethality in mammals has been ascribed to severe vasospasm of coronary vessels, cardiac arrhythmia, and inotropic effects. This Actinia equina (Beadlet anemone) protein is Equinatoxin-1''.